The chain runs to 794 residues: DNA ligase (794 aa).

NAD(+) is bound by residues 35–39 (DAEYD), 84–85 (SL), and E126. K128 acts as the N6-AMP-lysine intermediate in catalysis. NAD(+)-binding residues include R149, E186, K302, and K326. Zn(2+) contacts are provided by C420, C423, C450, and C456. The BRCT domain maps to 711-794 (VEGLPLAGQT…KLLDEYGVAH (84 aa)).

It belongs to the NAD-dependent DNA ligase family. LigA subfamily. Mg(2+) is required as a cofactor. The cofactor is Mn(2+).

It catalyses the reaction NAD(+) + (deoxyribonucleotide)n-3'-hydroxyl + 5'-phospho-(deoxyribonucleotide)m = (deoxyribonucleotide)n+m + AMP + beta-nicotinamide D-nucleotide.. DNA ligase that catalyzes the formation of phosphodiester linkages between 5'-phosphoryl and 3'-hydroxyl groups in double-stranded DNA using NAD as a coenzyme and as the energy source for the reaction. It is essential for DNA replication and repair of damaged DNA. The chain is DNA ligase from Pseudomonas paraeruginosa (strain DSM 24068 / PA7) (Pseudomonas aeruginosa (strain PA7)).